Consider the following 746-residue polypeptide: Bud site selection protein 7 (746 aa).

A CHS5-binding region spans residues 733 to 746 (LNFFTTCTIGCYDA).

Belongs to the CHAPS family. In terms of assembly, component of the CHS5/6 complex composed of the 4 CHAPS proteins BCH1, BCH2v, BUD7, and CHS6 as well as at least CHS5 and GTP-bound ARF1. The complex interacts with the cargo protein CHS3.

The protein localises to the golgi apparatus. The protein resides in the trans-Golgi network membrane. Member of the CHS5-ARF1P-binding proteins (CHAPS) which mediates export of specific cargo proteins, including chitin synthase CHS3. May be involved in positioning the proximal bud pole signal. This is Bud site selection protein 7 (BUD7) from Saccharomyces cerevisiae (strain ATCC 204508 / S288c) (Baker's yeast).